The sequence spans 663 residues: UvrABC system protein B (663 aa).

The region spanning 31-188 is the Helicase ATP-binding domain; the sequence is DNIEGGEKAQ…NDLVDIQFER (158 aa). 44-51 lines the ATP pocket; sequence GATGTGKT. The Beta-hairpin motif lies at 97–120; that stretch reads YYDYYQPEAYVPSSDTYIEKDSSV. The 167-residue stretch at 435–601 folds into the Helicase C-terminal domain; that stretch reads QMDDLLGEIN…TIKKDIRDLI (167 aa). One can recognise a UVR domain in the interval 627–662; it reads QEAIKKLQKQMQEAAELLDFELAAQIRDMVLELKAM.

This sequence belongs to the UvrB family. Forms a heterotetramer with UvrA during the search for lesions. Interacts with UvrC in an incision complex.

It is found in the cytoplasm. The UvrABC repair system catalyzes the recognition and processing of DNA lesions. A damage recognition complex composed of 2 UvrA and 2 UvrB subunits scans DNA for abnormalities. Upon binding of the UvrA(2)B(2) complex to a putative damaged site, the DNA wraps around one UvrB monomer. DNA wrap is dependent on ATP binding by UvrB and probably causes local melting of the DNA helix, facilitating insertion of UvrB beta-hairpin between the DNA strands. Then UvrB probes one DNA strand for the presence of a lesion. If a lesion is found the UvrA subunits dissociate and the UvrB-DNA preincision complex is formed. This complex is subsequently bound by UvrC and the second UvrB is released. If no lesion is found, the DNA wraps around the other UvrB subunit that will check the other stand for damage. In Streptococcus mutans serotype c (strain ATCC 700610 / UA159), this protein is UvrABC system protein B.